Here is a 313-residue protein sequence, read N- to C-terminus: Tyrosine recombinase XerC (313 aa).

The Core-binding (CB) domain maps to N11–I97. Positions P118–D298 constitute a Tyr recombinase domain. Residues R157, K181, H250, R253, and H276 contribute to the active site. Catalysis depends on Y285, which acts as the O-(3'-phospho-DNA)-tyrosine intermediate.

Belongs to the 'phage' integrase family. XerC subfamily. Forms a cyclic heterotetrameric complex composed of two molecules of XerC and two molecules of XerD.

The protein localises to the cytoplasm. Its function is as follows. Site-specific tyrosine recombinase, which acts by catalyzing the cutting and rejoining of the recombining DNA molecules. The XerC-XerD complex is essential to convert dimers of the bacterial chromosome into monomers to permit their segregation at cell division. It also contributes to the segregational stability of plasmids. This chain is Tyrosine recombinase XerC, found in Vibrio campbellii (strain ATCC BAA-1116).